We begin with the raw amino-acid sequence, 156 residues long: Probable cyclic pyranopterin monophosphate synthase (156 aa).

Residues 74–76 (LCH) and 110–111 (ME) each bind substrate. Residue Asp-125 is part of the active site.

This sequence belongs to the MoaC family. In terms of assembly, homohexamer; trimer of dimers.

It catalyses the reaction (8S)-3',8-cyclo-7,8-dihydroguanosine 5'-triphosphate = cyclic pyranopterin phosphate + diphosphate. It participates in cofactor biosynthesis; molybdopterin biosynthesis. Its function is as follows. Catalyzes the conversion of (8S)-3',8-cyclo-7,8-dihydroguanosine 5'-triphosphate to cyclic pyranopterin monophosphate (cPMP). In Thermococcus onnurineus (strain NA1), this protein is Probable cyclic pyranopterin monophosphate synthase.